The primary structure comprises 80 residues: Inner kinetochore subunit MHF2 (80 aa).

This sequence belongs to the CENP-X/MHF2 family. In terms of assembly, the MHF histone-fold complex is a heterotetramer of 2 MHF1-MHF2 heterodimers. Together with MPH1/FANCM, forms the FANCM-MHF complex. Component of the inner kinetochore constitutive centromere-associated network (CCAN) (also known as central kinetochore CTF19 complex in yeast), which is composed of at least AME1, CHL4, CNN1, CTF3, CTF19, IML3, MCM16, MCM21, MCM22, MHF1, MHF2, MIF2, NKP1, NKP2, OKP1 and WIP1.

In terms of biological role, DNA-binding component of a FANCM-MHF complex involved in DNA damage repair and genome maintenance. FANCM-MHF promotes gene conversion at blocked replication forks, probably by reversal of the stalled fork. Component of the kinetochore, a multiprotein complex that assembles on centromeric DNA and attaches chromosomes to spindle microtubules, mediating chromosome segregation and sister chromatid segregation during meiosis and mitosis. Component of the inner kinetochore constitutive centromere-associated network (CCAN), which serves as a structural platform for outer kinetochore assembly. This is Inner kinetochore subunit MHF2 from Saccharomyces cerevisiae (strain ATCC 204508 / S288c) (Baker's yeast).